Here is a 2167-residue protein sequence, read N- to C-terminus: SH3 and multiple ankyrin repeat domains protein 1 (2167 aa).

Residues 1–63 (MTHSPATSED…TRGLQGRSMS (63 aa)) form a disordered region. The span at 17–32 (SECPEGGSESDSSPDG) shows a compositional bias: low complexity. Residues 33 to 47 (PGRGPQGTRGRGSGA) are compositionally biased toward gly residues. Omega-N-methylarginine is present on Arg-43. A Phosphotyrosine modification is found at Tyr-186. 6 ANK repeats span residues 212 to 242 (SGET…HIDF), 246 to 275 (DGMT…SPNY), 279 to 309 (RGLT…QLGI), 313 to 342 (NGWQ…EPGA), 346 to 375 (SGNT…NKDV), and 379 to 407 (NGQT…EQDV). Disordered regions lie at residues 413-432 (SPKY…TVPP) and 454-546 (PGAS…SRGR). Low complexity predominate over residues 454-479 (PGASSSGTPGPTSGSQGQSQPSAPST). Residues 527-542 (PAGGTGGSGGPGGSLG) are compositionally biased toward gly residues. Residue Ser-540 is modified to Phosphoserine. An Omega-N-methylarginine modification is found at Arg-544. The SH3 domain occupies 554 to 613 (VPGRSFMAVKSYQAQGEGEISLSKGEKIKVLSIGEGGFWEGQVKGRVGWFPSDCLEEVAN). The PDZ domain maps to 663–757 (TVLLQKKDSE…TLMVKVVMVT (95 aa)). Residues Ser-671 and Ser-791 each carry the phosphoserine modification. The interval 841–894 (ISASESPGPGGLASLGKHRPKGFFATESSFDPHHRSQPSYDRPSFLPPGPGLML) is disordered. Ser-898 is modified (phosphoserine). 2 disordered regions span residues 917-1233 (SRSL…LDFT) and 1245-1290 (RREG…RHSK). Positions 928-947 (IPPPPTTSPPEPPYSTPPAP) are enriched in pro residues. Omega-N-methylarginine is present on Arg-958. Positions 969–980 (PLPASSPSSFDG) are enriched in low complexity. The segment covering 1004 to 1028 (AHHHPPHHHHHHAPPPQPHHHHAHP) has biased composition (basic residues). Omega-N-methylarginine is present on Arg-1059. Over residues 1064 to 1089 (SPTSGAPSPSHHSSSGGSSGPAQAPA) the composition is skewed to low complexity. An omega-N-methylarginine mark is found at Arg-1098 and Arg-1109. Low complexity-rich tracts occupy residues 1132-1146 (SLPP…ALPR) and 1171-1184 (STSS…GSST). Residues 1203 to 1224 (SPAPATSPVPPSPSPVPTPASP) are compositionally biased toward pro residues. The segment covering 1245-1256 (RREGGWQNEARR) has biased composition (basic and acidic residues). At Arg-1257 the chain carries Asymmetric dimethylarginine. At Ser-1291 the chain carries Phosphoserine. 8 disordered regions span residues 1308–1331 (GGSS…GSSS), 1361–1417 (LAAR…VLRL), 1429–1458 (RAGL…PPTA), 1500–1725 (FLEN…AGVA), 1740–1790 (GQAF…TPTS), 1828–1866 (VPPV…QPQA), 1898–1988 (PWAR…STRH), and 2002–2029 (RRAP…LPIL). A compositionally biased stretch (basic and acidic residues) spans 1363–1372 (ARERALKESS). Residues 1378-1395 (PQPPPRPPSPRYDAPPPT) are compositionally biased toward pro residues. A compositionally biased stretch (basic residues) spans 1396-1408 (LHHHSPHSPHSPH). Arg-1429 carries the omega-N-methylarginine modification. Ser-1442 bears the Phosphoserine mark. A compositionally biased stretch (low complexity) spans 1530–1541 (RRVLPTSPTSPR). Positions 1589–1615 (PLTPGPPHPLPDPPSPATPLPAAPPPA) are enriched in pro residues. The segment covering 1624 to 1641 (DSTASSLTSYDSEVATLT) has biased composition (polar residues). Over residues 1648 to 1676 (PGDPPAPGPPAPAAPAPPAPQPGPDPPPG) the composition is skewed to pro residues. Positions 1684-1694 (VDSRSSSDHPL) are enriched in basic and acidic residues. Residues 1695–1708 (ETISSASTLSSLSA) show a composition bias toward low complexity. Positions 1709-1724 (EGGGNTGGVAGGGAGV) are enriched in gly residues. Over residues 1850–1861 (PGPPPPPLPGPL) the composition is skewed to pro residues. Arg-1901 bears the Omega-N-methylarginine mark. 3 stretches are compositionally biased toward low complexity: residues 1934–1945 (SQTSLLSKPSSS), 1960–1985 (TGSG…ASAS), and 2002–2012 (RRAPSPSLLPA). An omega-N-methylarginine mark is found at Arg-2022, Arg-2042, and Arg-2080. The SAM domain occupies 2104 to 2167 (WTKFDVADWL…DRALKFFLER (64 aa)).

The protein belongs to the SHANK family. In terms of assembly, may homomultimerize via its SAM domain. Interacts with the C-terminus of SSTR2 via the PDZ domain. Interacts with SHARPIN, SPTAN1, HOMER1 and DLGAP1/GKAP. Part of a complex with DLG4/PSD-95 and DLGAP1/GKAP. Interacts with BAIAP2. Interacts with IGSF9. Interacts with HOMER1 and HOMER3. In terms of tissue distribution, in brain, highly expressed in cortex, hippocampus and cerebellum.

The protein resides in the cytoplasm. It is found in the synapse. It localises to the postsynaptic density. Its function is as follows. Seems to be an adapter protein in the postsynaptic density (PSD) of excitatory synapses that interconnects receptors of the postsynaptic membrane including NMDA-type and metabotropic glutamate receptors, and the actin-based cytoskeleton. Plays a role in the structural and functional organization of the dendritic spine and synaptic junction. Overexpression promotes maturation of dendritic spines and the enlargement of spine heads via its ability to recruit Homer to postsynaptic sites, and enhances presynaptic function. This chain is SH3 and multiple ankyrin repeat domains protein 1 (Shank1), found in Mus musculus (Mouse).